The sequence spans 601 residues: Glutamine--fructose-6-phosphate aminotransferase [isomerizing] (601 aa).

The active-site Nucleophile; for GATase activity is the Cys-2. One can recognise a Glutamine amidotransferase type-2 domain in the interval 2–218 (CGIVGYIGYD…DHEIVIVKKD (217 aa)). SIS domains lie at 284-423 (IIND…EHGR) and 453-591 (IATD…VDKP). Lys-596 (for Fru-6P isomerization activity) is an active-site residue.

As to quaternary structure, homodimer.

The protein localises to the cytoplasm. The enzyme catalyses D-fructose 6-phosphate + L-glutamine = D-glucosamine 6-phosphate + L-glutamate. Its function is as follows. Catalyzes the first step in hexosamine metabolism, converting fructose-6P into glucosamine-6P using glutamine as a nitrogen source. The sequence is that of Glutamine--fructose-6-phosphate aminotransferase [isomerizing] from Staphylococcus aureus (strain COL).